We begin with the raw amino-acid sequence, 410 residues long: Dihydrolipoyllysine-residue succinyltransferase component of 2-oxoglutarate dehydrogenase complex (410 aa).

A Lipoyl-binding domain is found at 3-81; the sequence is IINIFIPDLP…QVIGTLLKIG (79 aa). Lys-44 is modified (N6-lipoyllysine). The region spanning 112–150 is the Peripheral subunit-binding (PSBD) domain; it reads TYSPTVRRLISMHDLRDVDIIQGTGTKNRLTRKDILNYL. Active-site residues include His-381 and Asp-385.

The protein belongs to the 2-oxoacid dehydrogenase family. Forms a 24-polypeptide structural core with octahedral symmetry. Part of the 2-oxoglutarate dehydrogenase (OGDH) complex composed of E1 (2-oxoglutarate dehydrogenase), E2 (dihydrolipoamide succinyltransferase) and E3 (dihydrolipoamide dehydrogenase); the complex contains multiple copies of the three enzymatic components (E1, E2 and E3). (R)-lipoate serves as cofactor.

It carries out the reaction N(6)-[(R)-dihydrolipoyl]-L-lysyl-[protein] + succinyl-CoA = N(6)-[(R)-S(8)-succinyldihydrolipoyl]-L-lysyl-[protein] + CoA. The protein operates within amino-acid degradation; L-lysine degradation via saccharopine pathway; glutaryl-CoA from L-lysine: step 6/6. Its function is as follows. E2 component of the 2-oxoglutarate dehydrogenase (OGDH) complex which catalyzes the second step in the conversion of 2-oxoglutarate to succinyl-CoA and CO(2). The polypeptide is Dihydrolipoyllysine-residue succinyltransferase component of 2-oxoglutarate dehydrogenase complex (sucB) (Buchnera aphidicola subsp. Baizongia pistaciae (strain Bp)).